Consider the following 484-residue polypeptide: Acetyl-coenzyme A carboxylase carboxyl transferase subunit beta, chloroplastic (484 aa).

One can recognise a CoA carboxyltransferase N-terminal domain in the interval 223-484 (LWIQCDNCYG…LHAFFPLNKN (262 aa)). Residues Cys-227, Cys-230, Cys-243, and Cys-246 each coordinate Zn(2+). Residues 227–246 (CDNCYGLMYKKVKMNVCEQC) form a C4-type zinc finger.

It belongs to the AccD/PCCB family. In terms of assembly, acetyl-CoA carboxylase is a heterohexamer composed of biotin carboxyl carrier protein, biotin carboxylase and 2 subunits each of ACCase subunit alpha and ACCase plastid-coded subunit beta (accD). Zn(2+) serves as cofactor.

It is found in the plastid. Its subcellular location is the chloroplast stroma. The enzyme catalyses N(6)-carboxybiotinyl-L-lysyl-[protein] + acetyl-CoA = N(6)-biotinyl-L-lysyl-[protein] + malonyl-CoA. It participates in lipid metabolism; malonyl-CoA biosynthesis; malonyl-CoA from acetyl-CoA: step 1/1. Component of the acetyl coenzyme A carboxylase (ACC) complex. Biotin carboxylase (BC) catalyzes the carboxylation of biotin on its carrier protein (BCCP) and then the CO(2) group is transferred by the transcarboxylase to acetyl-CoA to form malonyl-CoA. This is Acetyl-coenzyme A carboxylase carboxyl transferase subunit beta, chloroplastic from Crucihimalaya wallichii (Rock-cress).